The sequence spans 477 residues: POC1 centriolar protein homolog B (477 aa).

WD repeat units lie at residues 16-55 (GHKA…RAYR), 58-97 (GHKD…KSSE), 100-139 (AHTA…FLYS), 142-181 (RHTH…CVNN), 183-223 (SDSV…LLQH), 226-265 (VHSC…LIYT), and 268-307 (GHTG…VHYR). Residues 449 to 469 (EQRLSLTEDKLKDCLENQQKL) adopt a coiled-coil conformation.

The protein belongs to the WD repeat POC1 family. As to quaternary structure, interacts with POC1A. Interacts with FAM161A. Interacts with CEP44; the interaction is direct and recruits POC1B to centriolar microtubules. Forms a microtubule-associated complex with POC5, CETN2 and FAM161A. Interacts with CCDC15. Phosphorylated in mitotic cells that may be mediated by CDK1.

It is found in the cytoplasm. The protein localises to the cytoskeleton. The protein resides in the microtubule organizing center. It localises to the centrosome. Its subcellular location is the centriole. It is found in the cilium basal body. The protein localises to the spindle pole. Functionally, plays an important role in centriole assembly and/or stability and ciliogenesis. Involved in early steps of centriole duplication, as well as in the later steps of centriole length control. Acts in concert with POC1A to ensure centriole integrity and proper mitotic spindle formation. Required for primary cilia formation, ciliary length and also cell proliferation. Required for retinal integrity. Acts as a positive regulator of centriole elongation. This chain is POC1 centriolar protein homolog B (Poc1b), found in Rattus norvegicus (Rat).